The following is a 253-amino-acid chain: DNA repair protein RecO (253 aa).

The protein belongs to the RecO family.

Functionally, involved in DNA repair and RecF pathway recombination. The polypeptide is DNA repair protein RecO (Dehalococcoides mccartyi (strain ATCC BAA-2266 / KCTC 15142 / 195) (Dehalococcoides ethenogenes (strain 195))).